We begin with the raw amino-acid sequence, 410 residues long: Peptidase T (410 aa).

A Zn(2+)-binding site is contributed by His79. Asp81 is an active-site residue. Residue Asp142 coordinates Zn(2+). Glu176 (proton acceptor) is an active-site residue. Zn(2+)-binding residues include Glu177, Asp199, and His381.

Belongs to the peptidase M20B family. Zn(2+) serves as cofactor.

Its subcellular location is the cytoplasm. The enzyme catalyses Release of the N-terminal residue from a tripeptide.. In terms of biological role, cleaves the N-terminal amino acid of tripeptides. This chain is Peptidase T, found in Bacillus velezensis (strain DSM 23117 / BGSC 10A6 / LMG 26770 / FZB42) (Bacillus amyloliquefaciens subsp. plantarum).